The following is a 243-amino-acid chain: Protein DMP8 (243 aa).

Positions 1-37 are disordered; the sequence is MEKTEESVGIRVYTTTTTQNPSPTSSRSPKPVPLSSL. A compositionally biased stretch (low complexity) spans 14–29; sequence TTTTTQNPSPTSSRSP. Transmembrane regions (helical) follow at residues 70–90, 98–118, 174–194, and 212–232; these read MLVN…LPTI, GINT…CFFF, VNDF…AFSD, and VMES…LVFP.

Belongs to the plant DMP1 protein family. Restricted to flowers.

Its subcellular location is the endoplasmic reticulum membrane. The protein resides in the vacuole membrane. Involved in membrane remodeling. This Arabidopsis thaliana (Mouse-ear cress) protein is Protein DMP8.